Consider the following 306-residue polypeptide: Pantothenate kinase (306 aa).

91 to 98 (GSVAVGKS) is an ATP binding site.

It belongs to the prokaryotic pantothenate kinase family.

The protein localises to the cytoplasm. It catalyses the reaction (R)-pantothenate + ATP = (R)-4'-phosphopantothenate + ADP + H(+). The protein operates within cofactor biosynthesis; coenzyme A biosynthesis; CoA from (R)-pantothenate: step 1/5. In Streptococcus pneumoniae serotype 2 (strain D39 / NCTC 7466), this protein is Pantothenate kinase.